A 427-amino-acid chain; its full sequence is 3-phosphoshikimate 1-carboxyvinyltransferase (427 aa).

3-phosphoshikimate contacts are provided by lysine 22, serine 23, and arginine 27. Lysine 22 serves as a coordination point for phosphoenolpyruvate. The phosphoenolpyruvate site is built by glycine 93 and arginine 122. Serine 167, glutamine 169, aspartate 315, and lysine 342 together coordinate 3-phosphoshikimate. Glutamine 169 serves as a coordination point for phosphoenolpyruvate. The active-site Proton acceptor is the aspartate 315. Phosphoenolpyruvate contacts are provided by arginine 346 and arginine 387.

The protein belongs to the EPSP synthase family. As to quaternary structure, monomer.

It is found in the cytoplasm. It catalyses the reaction 3-phosphoshikimate + phosphoenolpyruvate = 5-O-(1-carboxyvinyl)-3-phosphoshikimate + phosphate. It participates in metabolic intermediate biosynthesis; chorismate biosynthesis; chorismate from D-erythrose 4-phosphate and phosphoenolpyruvate: step 6/7. Its function is as follows. Catalyzes the transfer of the enolpyruvyl moiety of phosphoenolpyruvate (PEP) to the 5-hydroxyl of shikimate-3-phosphate (S3P) to produce enolpyruvyl shikimate-3-phosphate and inorganic phosphate. The sequence is that of 3-phosphoshikimate 1-carboxyvinyltransferase from Thermus thermophilus (strain ATCC 27634 / DSM 579 / HB8).